Reading from the N-terminus, the 144-residue chain is Ferredoxin-thioredoxin reductase catalytic chain, chloroplastic (144 aa).

The transit peptide at Met1–Gln31 directs the protein to the chloroplast. Cys83 is a [4Fe-4S] cluster binding site. Cys85 functions as the Nucleophile in the catalytic mechanism. Cys85 and Cys115 are oxidised to a cystine. [4Fe-4S] cluster contacts are provided by Cys102, Cys104, and Cys113.

Belongs to the ferredoxin thioredoxin reductase beta subunit family. In terms of assembly, heterodimer of subunit A (variable subunit) and subunit B (catalytic subunit). Heterodimeric FTR forms a complex with ferredoxin and thioredoxin. [4Fe-4S] cluster is required as a cofactor.

Its subcellular location is the plastid. It localises to the chloroplast. It catalyses the reaction [thioredoxin]-disulfide + 2 reduced [2Fe-2S]-[ferredoxin] + 2 H(+) = [thioredoxin]-dithiol + 2 oxidized [2Fe-2S]-[ferredoxin]. Functionally, catalytic subunit of the ferredoxin-thioredoxin reductase (FTR), which catalyzes the two-electron reduction of thioredoxins by the electrons provided by reduced ferredoxin. The polypeptide is Ferredoxin-thioredoxin reductase catalytic chain, chloroplastic (FTRC) (Glycine max (Soybean)).